Here is a 197-residue protein sequence, read N- to C-terminus: Putative AgrB-like protein (197 aa).

The next 4 membrane-spanning stretches (helical) occupy residues 29–49 (FGFT…AVGL), 79–99 (SIGC…VPFA), 102–122 (YAWI…APYY), and 143–163 (ILIV…LVLG).

It belongs to the AgrB family.

The protein resides in the cell membrane. Functionally, may be involved in the proteolytic processing of a quorum sensing system signal molecule precursor. In Halalkalibacterium halodurans (strain ATCC BAA-125 / DSM 18197 / FERM 7344 / JCM 9153 / C-125) (Bacillus halodurans), this protein is Putative AgrB-like protein.